Here is a 217-residue protein sequence, read N- to C-terminus: Adapter protein MecA (217 aa).

Belongs to the MecA family. Homodimer.

Functionally, enables the recognition and targeting of unfolded and aggregated proteins to the ClpC protease or to other proteins involved in proteolysis. Acts negatively in the development of competence by binding ComK and recruiting it to the ClpCP protease. When overexpressed, inhibits sporulation. Also involved in Spx degradation by ClpC. The chain is Adapter protein MecA from Alkalihalophilus pseudofirmus (strain ATCC BAA-2126 / JCM 17055 / OF4) (Bacillus pseudofirmus).